The sequence spans 432 residues: Argininosuccinate lyase (432 aa).

This sequence belongs to the lyase 1 family. Argininosuccinate lyase subfamily.

It localises to the cytoplasm. The enzyme catalyses 2-(N(omega)-L-arginino)succinate = fumarate + L-arginine. It participates in amino-acid biosynthesis; L-arginine biosynthesis; L-arginine from L-ornithine and carbamoyl phosphate: step 3/3. The chain is Argininosuccinate lyase from Xanthomonas axonopodis pv. citri (strain 306).